The primary structure comprises 128 residues: Ribonuclease P protein component (128 aa).

Belongs to the RnpA family. As to quaternary structure, consists of a catalytic RNA component (M1 or rnpB) and a protein subunit.

The enzyme catalyses Endonucleolytic cleavage of RNA, removing 5'-extranucleotides from tRNA precursor.. Its function is as follows. RNaseP catalyzes the removal of the 5'-leader sequence from pre-tRNA to produce the mature 5'-terminus. It can also cleave other RNA substrates such as 4.5S RNA. The protein component plays an auxiliary but essential role in vivo by binding to the 5'-leader sequence and broadening the substrate specificity of the ribozyme. This chain is Ribonuclease P protein component, found in Prochlorococcus marinus (strain MIT 9312).